The primary structure comprises 101 residues: Urease subunit beta (101 aa).

It belongs to the urease beta subunit family. Heterotrimer of UreA (gamma), UreB (beta) and UreC (alpha) subunits. Three heterotrimers associate to form the active enzyme.

It localises to the cytoplasm. The enzyme catalyses urea + 2 H2O + H(+) = hydrogencarbonate + 2 NH4(+). Its pathway is nitrogen metabolism; urea degradation; CO(2) and NH(3) from urea (urease route): step 1/1. This chain is Urease subunit beta, found in Acaryochloris marina (strain MBIC 11017).